The chain runs to 231 residues: Urease subunit gamma/beta (231 aa).

The interval M1–P101 is urease gamma. The interval G102–A231 is urease beta.

It in the N-terminal section; belongs to the urease gamma subunit family. The protein in the C-terminal section; belongs to the urease beta subunit family. As to quaternary structure, heterohexamer of 3 UreC (alpha) and 3 UreAB (gamma/beta) subunits.

The protein localises to the cytoplasm. The enzyme catalyses urea + 2 H2O + H(+) = hydrogencarbonate + 2 NH4(+). It participates in nitrogen metabolism; urea degradation; CO(2) and NH(3) from urea (urease route): step 1/1. This Pseudomonas syringae pv. tomato (strain ATCC BAA-871 / DC3000) protein is Urease subunit gamma/beta.